A 241-amino-acid chain; its full sequence is Ribosome assembly factor mrt4 (241 aa).

The protein belongs to the universal ribosomal protein uL10 family. In terms of assembly, associates with the pre-60S ribosomal particle.

Its subcellular location is the nucleus. The protein resides in the nucleolus. The protein localises to the cytoplasm. Its function is as follows. Component of the ribosome assembly machinery. Nuclear paralog of the ribosomal protein P0, it binds pre-60S subunits at an early stage of assembly in the nucleolus, and is replaced by P0 in cytoplasmic pre-60S subunits and mature 80S ribosomes. In Schizosaccharomyces pombe (strain 972 / ATCC 24843) (Fission yeast), this protein is Ribosome assembly factor mrt4.